Here is a 60-residue protein sequence, read N- to C-terminus: Arabinogalactan protein 12 (60 aa).

A signal peptide spans 1 to 27; the sequence is MESMKMKLIVVLMVAIVAFSAVGNVAA. A Pyrrolidone carboxylic acid modification is found at Gln-28. Pro-32, Pro-34, and Pro-36 each carry 4-hydroxyproline. Pro-32, Pro-34, and Pro-36 each carry an O-linked (Ara...) hydroxyproline glycan. A lipid anchor (GPI-anchor amidated serine) is attached at Ser-38. A propeptide spans 39 to 60 (removed in mature form); it reads DAAMFVPALFASVAALASGFLF.

It belongs to the AG-peptide AGP family. In terms of processing, contains 4-hydroxyproline; hydroxylated on Pro-32, Pro-34 and Pro-36. Post-translationally, O-glycosylated on hydroxyprolines; noncontiguous hydroxylproline residues are glycosylated with arabinogalactan. In terms of tissue distribution, expressed in reproductive tissues. Expressed in chalaza, funiculus, stigma, septum, style and transmitting tract.

Its subcellular location is the cell membrane. In terms of biological role, proteoglycan that seems to be implicated in diverse developmental roles such as differentiation, cell-cell recognition, embryogenesis and programmed cell death. This chain is Arabinogalactan protein 12, found in Arabidopsis thaliana (Mouse-ear cress).